A 151-amino-acid polypeptide reads, in one-letter code: Macrodomain Ter protein (151 aa).

Belongs to the MatP family. In terms of assembly, homodimer.

It is found in the cytoplasm. In terms of biological role, required for spatial organization of the terminus region of the chromosome (Ter macrodomain) during the cell cycle. Prevents early segregation of duplicated Ter macrodomains during cell division. Binds specifically to matS, which is a 13 bp signature motif repeated within the Ter macrodomain. This chain is Macrodomain Ter protein, found in Escherichia fergusonii (strain ATCC 35469 / DSM 13698 / CCUG 18766 / IAM 14443 / JCM 21226 / LMG 7866 / NBRC 102419 / NCTC 12128 / CDC 0568-73).